The sequence spans 193 residues: NADH-quinone oxidoreductase subunit B (193 aa).

Positions 1–11 are enriched in polar residues; that stretch reads MGLTGTNTTLV. The tract at residues 1 to 23 is disordered; the sequence is MGLTGTNTTLVAPQPKGILDPRT. The [4Fe-4S] cluster site is built by C72, C73, C137, and C167.

It belongs to the complex I 20 kDa subunit family. NDH-1 is composed of 14 different subunits. Subunits NuoB, C, D, E, F, and G constitute the peripheral sector of the complex. The cofactor is [4Fe-4S] cluster.

It localises to the cell inner membrane. It catalyses the reaction a quinone + NADH + 5 H(+)(in) = a quinol + NAD(+) + 4 H(+)(out). Functionally, NDH-1 shuttles electrons from NADH, via FMN and iron-sulfur (Fe-S) centers, to quinones in the respiratory chain. Couples the redox reaction to proton translocation (for every two electrons transferred, four hydrogen ions are translocated across the cytoplasmic membrane), and thus conserves the redox energy in a proton gradient. This chain is NADH-quinone oxidoreductase subunit B, found in Brucella canis (strain ATCC 23365 / NCTC 10854 / RM-666).